The sequence spans 441 residues: Polycomb protein EED (441 aa).

Positions 1–72 (MSEREVSTAP…PGRKSWGKGK (72 aa)) are disordered. N-acetylserine is present on S2. 2 positions are modified to phosphoserine: S2 and S34. Residues 45–61 (ESGTNTERPDTPTNTPN) show a composition bias toward polar residues. T55 carries the phosphothreonine modification. K66 carries the N6,N6,N6-trimethyllysine; alternate modification. K66 is modified (N6,N6-dimethyllysine; alternate). At K66 the chain carries N6-methyllysine; alternate. The segment at 81–441 (SFKCVNSLKE…ASIWRWDRLR (361 aa)) is interaction with EZH2. 4 WD repeats span residues 91–134 (DHNQ…EIRL), 142–185 (DADE…CIKH), 188–228 (GHGN…LVAI), and 234–275 (GHRD…NAIK). Required for interaction with the matrix protein MA of HIV-1 regions lie at residues 149–303 (TCAW…STRD) and 301–441 (TRDI…DRLR). N6,N6,N6-trimethyllysine; alternate occurs at positions 197, 268, and 284. K197, K268, and K284 each carry N6,N6-dimethyllysine; alternate. N6-methyllysine; alternate occurs at positions 197, 268, and 284. WD repeat units lie at residues 304–341 (IHRN…DDID), 359–399 (SQCD…PHKA), and 408–441 (KCGA…DRLR).

Belongs to the WD repeat ESC family. In terms of assembly, component of the PRC2/EED-EZH2 complex, which includes EED, EZH2, SUZ12, RBBP4 and RBBP7 and possibly AEBP2. The minimum components required for methyltransferase activity of the PRC2/EED-EZH2 complex are EED, EZH2 and SUZ12. Component of the PRC2/EED-EZH1 complex, which includes EED, EZH1, SUZ12, RBBP4 and AEBP2. The PRC2 complex may also interact with DNMT1, DNMT3A, DNMT3B and PHF1 via the EZH2 subunit and with SIRT1 via the SUZ12 subunit. Interacts with HDAC, HDAC2, histone H1 and YY1. May interact with ITGA4, ITGAE and ITGB7. Interacts with CDYL. Interacts with BMAL1. Interacts with KMT2A/MLL1. As to quaternary structure, (Microbial infection) May interact with the MA protein of HIV-1. In terms of processing, methylated. Binding to histone H1 'Lys-26' promotes mono-, di-, and trimethylation of internal lysines. In terms of tissue distribution, expressed in brain, colon, heart, kidney, liver, lung, muscle, ovary, peripheral blood leukocytes, pancreas, placenta, prostate, spleen, small intestine, testis, thymus and uterus. Appears to be overexpressed in breast and colon cancer.

It is found in the nucleus. Its subcellular location is the chromosome. Functionally, polycomb group (PcG) protein. Component of the PRC2/EED-EZH2 complex, which methylates 'Lys-9' and 'Lys-27' of histone H3, leading to transcriptional repression of the affected target gene. Also recognizes 'Lys-26' trimethylated histone H1 with the effect of inhibiting PRC2 complex methyltransferase activity on nucleosomal histone H3 'Lys-27', whereas H3 'Lys-27' recognition has the opposite effect, enabling the propagation of this repressive mark. The PRC2/EED-EZH2 complex may also serve as a recruiting platform for DNA methyltransferases, thereby linking two epigenetic repression systems. Genes repressed by the PRC2/EED-EZH2 complex include HOXC8, HOXA9, MYT1 and CDKN2A. The chain is Polycomb protein EED from Homo sapiens (Human).